Consider the following 118-residue polypeptide: uncharacterized protein (118 aa).

Transmembrane regions (helical) follow at residues 17 to 37, 60 to 80, and 90 to 110; these read IIIIFYVITSMVQGNYHFAIL, INYTIIGTIIGQYTVLIIMIF, and YIEQILTTNLSIVGYAFGSFW.

The protein localises to the membrane. This is an uncharacterized protein from Acanthamoeba polyphaga mimivirus (APMV).